Reading from the N-terminus, the 226-residue chain is Large ribosomal subunit protein uL1 (226 aa).

This sequence belongs to the universal ribosomal protein uL1 family. Part of the 50S ribosomal subunit.

In terms of biological role, binds directly to 23S rRNA. The L1 stalk is quite mobile in the ribosome, and is involved in E site tRNA release. Functionally, protein L1 is also a translational repressor protein, it controls the translation of the L11 operon by binding to its mRNA. This is Large ribosomal subunit protein uL1 from Buchnera aphidicola subsp. Cinara cedri (strain Cc).